A 992-amino-acid polypeptide reads, in one-letter code: UPF0182 protein BCG_3215c (992 aa).

7 helical membrane-spanning segments follow: residues 18–38 (ILIM…RLID), 63–83 (IVVC…GLAL), 113–133 (LVGI…AQSY), 175–195 (LVSV…FGGI), 210–230 (VQLV…YWLD), 259–279 (KLIL…AIAL), and 287–307 (IGLV…PLIV). A disordered region spans residues 906–938 (PTEAAVPPSPAANPPPPASGPQPPPVTAAPPVP). Pro residues predominate over residues 912–938 (PPSPAANPPPPASGPQPPPVTAAPPVP).

The protein belongs to the UPF0182 family.

It is found in the cell membrane. The chain is UPF0182 protein BCG_3215c from Mycobacterium bovis (strain BCG / Pasteur 1173P2).